Consider the following 189-residue polypeptide: Putative lipoprotein LppK (189 aa).

Residues 1–22 form the signal peptide; that stretch reads MRRNIRVTLGAATIVAALGLSG. Cys-23 carries the N-palmitoyl cysteine lipid modification. Cys-23 carries S-diacylglycerol cysteine lipidation. Disordered regions lie at residues 26–49 and 166–189; these read PEFKRSSPPAPSLPPVTSSPLEAA and MGNSPDSTPSATSPAPAPSPTPPG. The segment covering 169 to 179 has biased composition (low complexity); that stretch reads SPDSTPSATSP. Pro residues predominate over residues 180–189; that stretch reads APAPSPTPPG.

It belongs to the MTB12 family.

The protein resides in the cell membrane. The chain is Putative lipoprotein LppK (lppK) from Mycobacterium tuberculosis (strain CDC 1551 / Oshkosh).